The chain runs to 235 residues: Mitochondrial inner membrane protease ATP23 homolog (235 aa).

His-114 contributes to the a divalent metal cation binding site. Glu-115 is a catalytic residue. Position 118 (His-118) interacts with a divalent metal cation.

Belongs to the peptidase M76 family.

The sequence is that of Mitochondrial inner membrane protease ATP23 homolog (atp23) from Xenopus laevis (African clawed frog).